The primary structure comprises 447 residues: Probable arabinosyltransferase ARAD1 (447 aa).

Residues 1-6 (MARKSS) lie on the Cytoplasmic side of the membrane. Residues 7–29 (LLKRAAIAVVSVIAIYVILNASV) traverse the membrane as a helical; Signal-anchor for type II membrane protein segment. The Lumenal portion of the chain corresponds to 30-447 (SRSLPSSSDL…TNQTGLITSI (418 aa)). Low complexity predominate over residues 32–41 (SLPSSSDLPR). The tract at residues 32-52 (SLPSSSDLPRQLIREDDDDEG) is disordered. Residues Asn427, Asn432, and Asn439 are each glycosylated (N-linked (GlcNAc...) asparagine).

It belongs to the glycosyltransferase 47 family. In terms of assembly, homodimer and heterodimer with ARAD2. As to expression, expressed in root vasculature, cotyledons, leaves, stems, vascular tissue of sepals, petals and stamens, pollen grains, mature siliques and abscission region of seeds.

The protein localises to the golgi apparatus membrane. Functionally, probable arabinosyl transferase responsible for the polymerization of arabinose into the arabinan of arabinogalactan. May function as inverting enzyme using UDP-beta-L-arabinopyranoside. May be important for arabinan side chains of rhamnogalacturonan I (RG-I), a major component of pectins. Cell wall pectic arabinans are involved in thigmomorphogenesis response of inflorescence stems to mechanical stress. The sequence is that of Probable arabinosyltransferase ARAD1 (ARAD1) from Arabidopsis thaliana (Mouse-ear cress).